The sequence spans 368 residues: 3-dehydroquinate synthase (368 aa).

NAD(+) is bound by residues 71–76 (DGEAFK), 105–109 (GVVGD), 129–130 (TT), Lys-142, Lys-151, and 169–172 (TLRT). Zn(2+) is bound by residues Glu-184, His-247, and His-264.

Belongs to the sugar phosphate cyclases superfamily. Dehydroquinate synthase family. Requires Co(2+) as cofactor. Zn(2+) is required as a cofactor. NAD(+) serves as cofactor.

Its subcellular location is the cytoplasm. It catalyses the reaction 7-phospho-2-dehydro-3-deoxy-D-arabino-heptonate = 3-dehydroquinate + phosphate. Its pathway is metabolic intermediate biosynthesis; chorismate biosynthesis; chorismate from D-erythrose 4-phosphate and phosphoenolpyruvate: step 2/7. Catalyzes the conversion of 3-deoxy-D-arabino-heptulosonate 7-phosphate (DAHP) to dehydroquinate (DHQ). This chain is 3-dehydroquinate synthase, found in Cupriavidus taiwanensis (strain DSM 17343 / BCRC 17206 / CCUG 44338 / CIP 107171 / LMG 19424 / R1) (Ralstonia taiwanensis (strain LMG 19424)).